A 36-amino-acid polypeptide reads, in one-letter code: Mu-agatoxin-Aa1a (36 aa).

4 cysteine pairs are disulfide-bonded: C2/C17, C9/C22, C16/C32, and C24/C30. N36 bears the Asparagine amide mark.

The protein belongs to the neurotoxin 07 (Beta/delta-agtx) family. 04 (aga-5) subfamily. As to expression, expressed by the venom gland.

It is found in the secreted. Functionally, insecticidal neurotoxin that induces an irreversible spastic paralysis when injected into insects. Modifies presynaptic voltage-gated sodium channels (Nav), causing them to open at the normal resting potential of the nerve. This leads to spontaneous release of neurotransmitter and repetitive action potentials in motor neurons. The sequence is that of Mu-agatoxin-Aa1a from Agelenopsis aperta (North American funnel-web spider).